Consider the following 418-residue polypeptide: Voltage-gated ClC-type chloride channel ClcB (418 aa).

The Cytoplasmic segment spans residues M1–R4. A helical membrane pass occupies residues L5–A25. The Periplasmic segment spans residues M26 to R53. A helical membrane pass occupies residues L54–F74. Over T75–K145 the chain is Cytoplasmic. A helical transmembrane segment spans residues L146–G166. Residues S167–T177 are Periplasmic-facing. A helical membrane pass occupies residues M178–I200. Residues N201–Y221 lie on the Cytoplasmic side of the membrane. Residues A222 to M242 traverse the membrane as a helical segment. Over N243–P257 the chain is Periplasmic. A helical membrane pass occupies residues W258–W278. Residues G279 to T290 lie on the Cytoplasmic side of the membrane. Residues A291 to A311 traverse the membrane as a helical segment. The Periplasmic segment spans residues S312–S315. The chain crosses the membrane as a helical span at residues G316–Y336. At G337–T351 the chain is on the cytoplasmic side. A helical membrane pass occupies residues L352–M372. The Periplasmic segment spans residues S373 to E379. Residues M380–I400 form a helical membrane-spanning segment. Over S401–S418 the chain is Cytoplasmic.

This sequence belongs to the chloride channel (TC 2.A.49) family. ClcB subfamily.

It localises to the cell inner membrane. Functionally, probably acts as an electrical shunt for an outwardly-directed proton pump that is linked to amino acid decarboxylation, as part of the extreme acid resistance (XAR) response. The sequence is that of Voltage-gated ClC-type chloride channel ClcB (clcB) from Escherichia coli O6:H1 (strain CFT073 / ATCC 700928 / UPEC).